A 262-amino-acid chain; its full sequence is Calbindin (262 aa).

T2 carries the post-translational modification N-acetylthreonine. EF-hand domains are found at residues 12–47, 54–89, 99–134, 143–178, and 187–222; these read ISAA…LQQA, DLTP…EENF, KSSE…LLQK, KLTE…QENF, and MCAK…LCEK. Residues D25, D27, N29, Y31, and E36 each coordinate Ca(2+). Residues D112, D114, S116, E123, D156, N158, D160, K162, E167, D200, D202, N204, Y206, and E211 each contribute to the Ca(2+) site.

It belongs to the calbindin family. In terms of tissue distribution, highly abundant in supporting cells. Also present in hair cells.

Functionally, buffers cytosolic calcium. May stimulate a membrane Ca(2+)-ATPase and a 3',5'-cyclic nucleotide phosphodiesterase. This chain is Calbindin (CALB1), found in Gallus gallus (Chicken).